The chain runs to 174 residues: RNA pyrophosphohydrolase (174 aa).

Residues 6–149 enclose the Nudix hydrolase domain; it reads GYRPNVGIIL…KRDVYERALS (144 aa). The Nudix box signature appears at 38–59; the sequence is GGIKPGESPEAAMYRELLEEVG.

The protein belongs to the Nudix hydrolase family. RppH subfamily. It depends on a divalent metal cation as a cofactor.

In terms of biological role, accelerates the degradation of transcripts by removing pyrophosphate from the 5'-end of triphosphorylated RNA, leading to a more labile monophosphorylated state that can stimulate subsequent ribonuclease cleavage. This is RNA pyrophosphohydrolase from Chromobacterium violaceum (strain ATCC 12472 / DSM 30191 / JCM 1249 / CCUG 213 / NBRC 12614 / NCIMB 9131 / NCTC 9757 / MK).